Here is a 312-residue protein sequence, read N- to C-terminus: MRPLAPDARCAPSRPGRGPWYARRPVTTPSDPPAALREPPPPARRAGKAGSGELVFTRVAGRTVLEKALARSPLKLLAPKNHGQAAWVFVASFGGGLVGGDELNLHARVGRGAAALLSTQASTKVYRSPLVSRQRLEAEVQAGGLLVAIPDPVVCFAGSRYEQDIDVALADDASLVLVDALSSGRSARGERWAFDRYASRVRVSRGGRAVLLDATRLDPAHGALPERMGRFDALATLVALGPRAASAAEALLAPRPPPERRAELVASASPLRGGGAVVRVAGTSVERVAGFLRGALAFLAGELGDDPFARKW.

Positions 1–50 (MRPLAPDARCAPSRPGRGPWYARRPVTTPSDPPAALREPPPPARRAGKAG) are disordered.

Belongs to the UreD family. UreD, UreF and UreG form a complex that acts as a GTP-hydrolysis-dependent molecular chaperone, activating the urease apoprotein by helping to assemble the nickel containing metallocenter of UreC. The UreE protein probably delivers the nickel.

The protein resides in the cytoplasm. Its function is as follows. Required for maturation of urease via the functional incorporation of the urease nickel metallocenter. The sequence is that of Urease accessory protein UreD from Sorangium cellulosum (strain So ce56) (Polyangium cellulosum (strain So ce56)).